The following is a 122-amino-acid chain: Ribosome-binding factor A (122 aa).

Belongs to the RbfA family. In terms of assembly, monomer. Binds 30S ribosomal subunits, but not 50S ribosomal subunits or 70S ribosomes.

It is found in the cytoplasm. Its function is as follows. One of several proteins that assist in the late maturation steps of the functional core of the 30S ribosomal subunit. Associates with free 30S ribosomal subunits (but not with 30S subunits that are part of 70S ribosomes or polysomes). Required for efficient processing of 16S rRNA. May interact with the 5'-terminal helix region of 16S rRNA. The chain is Ribosome-binding factor A from Geotalea uraniireducens (strain Rf4) (Geobacter uraniireducens).